A 397-amino-acid polypeptide reads, in one-letter code: Elongation factor Tu (397 aa).

The tr-type G domain occupies 10–206; it reads KPHVNIGTIG…AVDTYIPTPE (197 aa). The tract at residues 19 to 26 is G1; the sequence is GHVDHGKT. A GTP-binding site is contributed by 19 to 26; it reads GHVDHGKT. T26 contributes to the Mg(2+) binding site. The segment at 60–64 is G2; that stretch reads GITIN. The interval 81-84 is G3; the sequence is DCPG. GTP is bound by residues 81–85 and 136–139; these read DCPGH and NKSD. Residues 136–139 are G4; sequence NKSD. The segment at 174–176 is G5; that stretch reads SAL.

The protein belongs to the TRAFAC class translation factor GTPase superfamily. Classic translation factor GTPase family. EF-Tu/EF-1A subfamily. In terms of assembly, monomer.

It is found in the cytoplasm. It catalyses the reaction GTP + H2O = GDP + phosphate + H(+). GTP hydrolase that promotes the GTP-dependent binding of aminoacyl-tRNA to the A-site of ribosomes during protein biosynthesis. This chain is Elongation factor Tu, found in Clostridium kluyveri (strain ATCC 8527 / DSM 555 / NBRC 12016 / NCIMB 10680 / K1).